Reading from the N-terminus, the 432-residue chain is Solute carrier family 38 member 8 (432 aa).

The next 11 membrane-spanning stretches (helical) occupy residues Ala29–Phe49, Phe59–Ala79, Leu103–Ile123, Ala144–Leu164, Ile175–Trp195, Val215–Cys237, Leu253–Phe273, Ile292–Phe312, Leu345–Leu365, Ile368–Leu388, and Gly409–Val429.

This sequence belongs to the amino acid/polyamine transporter 2 family. As to expression, expressed in neurons located in the gray matter. Highly expressed in thalamus, hypothalamus, amygdala and pons. Expressed in the CA3 area of hippocampus and in the Purkinje layer of the cerebellum (at protein level). Expressed in the eye.

The protein localises to the membrane. Its subcellular location is the cytoplasm. The protein resides in the cell cortex. It localises to the cell projection. It is found in the axon. It carries out the reaction L-glutamine(out) = L-glutamine(in). The catalysed reaction is L-alanine(in) = L-alanine(out). It catalyses the reaction L-histidine(out) = L-histidine(in). The enzyme catalyses L-aspartate(out) = L-aspartate(in). It carries out the reaction L-arginine(in) = L-arginine(out). The catalysed reaction is L-leucine(in) = L-leucine(out). Its function is as follows. Electrogenic sodium-dependent amino acid transporter with a preference for L-glutamine, L-alanine, L-histidine, L-aspartate and L-arginine. May facilitate glutamine uptake in both excitatory and inhibitory neurons. The transport mechanism and stoichiometry remain to be elucidated. This Mus musculus (Mouse) protein is Solute carrier family 38 member 8.